We begin with the raw amino-acid sequence, 350 residues long: MGDRVTVGIVGASGYGGVQLVRLLLEHPKVDIVYLGGEGSAGRPYTELYPHLQGRVNLTVEPVSVEVIRDRAQVVFLSLPNGIACQLAPQLLEQGCKVLDLSADYRFQDLQTYTQWYGEPREDQATAQKAVYGLPELYRDRIRQSALIGCPGCYPTASLLALAPLMKQGLIEPNTAIIDAKSGTSGGGRQGKINLLLAEADNSLAPYNVARHRHTPEIEAICSDLAGQSVLVQFTPHLVPMPRGILATVYATLRDPGLVREDLITIYQAFYRHSPWVNILPPGLYPQTKWAWGTNACFIGIEVDERTGRVIVMSAIDNLMKGQASQAVQCLNLMMGWPETMGLPQVAFYP.

The active site involves cysteine 153.

Belongs to the NAGSA dehydrogenase family. Type 1 subfamily.

The protein localises to the cytoplasm. It carries out the reaction N-acetyl-L-glutamate 5-semialdehyde + phosphate + NADP(+) = N-acetyl-L-glutamyl 5-phosphate + NADPH + H(+). It functions in the pathway amino-acid biosynthesis; L-arginine biosynthesis; N(2)-acetyl-L-ornithine from L-glutamate: step 3/4. In terms of biological role, catalyzes the NADPH-dependent reduction of N-acetyl-5-glutamyl phosphate to yield N-acetyl-L-glutamate 5-semialdehyde. In Thermosynechococcus vestitus (strain NIES-2133 / IAM M-273 / BP-1), this protein is N-acetyl-gamma-glutamyl-phosphate reductase.